Here is a 429-residue protein sequence, read N- to C-terminus: Glutamyl-tRNA reductase (429 aa).

Substrate contacts are provided by residues 50–53, Ser110, 115–117, and Gln121; these read TCNR and ETQ. The Nucleophile role is filled by Cys51. 190–195 serves as a coordination point for NADP(+); it reads GAGEMA.

This sequence belongs to the glutamyl-tRNA reductase family. As to quaternary structure, homodimer.

It catalyses the reaction (S)-4-amino-5-oxopentanoate + tRNA(Glu) + NADP(+) = L-glutamyl-tRNA(Glu) + NADPH + H(+). It participates in porphyrin-containing compound metabolism; protoporphyrin-IX biosynthesis; 5-aminolevulinate from L-glutamyl-tRNA(Glu): step 1/2. Catalyzes the NADPH-dependent reduction of glutamyl-tRNA(Glu) to glutamate 1-semialdehyde (GSA). This is Glutamyl-tRNA reductase from Campylobacter hominis (strain ATCC BAA-381 / DSM 21671 / CCUG 45161 / LMG 19568 / NCTC 13146 / CH001A).